Here is a 96-residue protein sequence, read N- to C-terminus: Putative defensin-like protein 263 (96 aa).

The signal sequence occupies residues 1-26; the sequence is MEKTSLKLVFLFSLTVIALCLSLSAA. 4 disulfide bridges follow: cysteine 48/cysteine 96, cysteine 67/cysteine 86, cysteine 73/cysteine 91, and cysteine 77/cysteine 93.

Belongs to the DEFL family.

The protein localises to the secreted. The polypeptide is Putative defensin-like protein 263 (Arabidopsis thaliana (Mouse-ear cress)).